Here is a 308-residue protein sequence, read N- to C-terminus: Autophagy-related protein 3 (308 aa).

The flexible region stretch occupies residues 83–159; it reads NFVETQTTET…NELADDDDDI (77 aa). The disordered stretch occupies residues 89–121; sequence TTETRDVGDGWELEGQSEGERESGREDTKSNEE. Residues 106-120 are compositionally biased toward basic and acidic residues; that stretch reads EGERESGREDTKSNE. C235 acts as the Glycyl thioester intermediate in catalysis. Positions 239-283 are handle region; the sequence is NVMKVLMEKVRASRHRARDTEAQKNAEEDWEDLQSDIDDGLRVDQ.

Belongs to the ATG3 family. Monomer. Interacts with ATG8 through an intermediate thioester bond between Cys-235 and the C-terminal Gly of ATG8. Interacts with the C-terminal region of the E1-like ATG7 enzyme. Also interacts with the ATG12-ATG5 conjugate.

Its subcellular location is the cytoplasm. In terms of biological role, E2 conjugating enzyme required for the cytoplasm to vacuole transport (Cvt) and autophagy. Required for selective autophagic degradation of the nucleus (nucleophagy) as well as for mitophagy which contributes to regulate mitochondrial quantity and quality by eliminating the mitochondria to a basal level to fulfill cellular energy requirements and preventing excess ROS production. Responsible for the E2-like covalent binding of phosphatidylethanolamine to the C-terminal Gly of ATG8. The ATG12-ATG5 conjugate plays a role of an E3 and promotes the transfer of ATG8 from ATG3 to phosphatidylethanolamine (PE). This step is required for the membrane association of ATG8. The formation of the ATG8-phosphatidylethanolamine conjugate is essential for autophagy and for the cytoplasm to vacuole transport (Cvt). The ATG8-PE conjugate mediates tethering between adjacent membranes and stimulates membrane hemifusion, leading to expansion of the autophagosomal membrane during autophagy. This Kluyveromyces marxianus (strain DMKU3-1042 / BCC 29191 / NBRC 104275) (Yeast) protein is Autophagy-related protein 3.